Consider the following 85-residue polypeptide: UPF0335 protein BARBAKC583_0130 (85 aa).

This sequence belongs to the UPF0335 family.

This is UPF0335 protein BARBAKC583_0130 from Bartonella bacilliformis (strain ATCC 35685 / KC583 / Herrer 020/F12,63).